The following is a 27-amino-acid chain: uncharacterized protein (27 aa).

It is found in the plastid. It localises to the chloroplast. This is an uncharacterized protein from Trieres chinensis (Marine centric diatom).